The primary structure comprises 346 residues: Queuosine 5'-phosphate N-glycosylase/hydrolase (346 aa).

Queuine is bound by residues His49, Phe243, Asp245, Asp310, and Asp315. Asp245 functions as the Nucleophile or transition state stabilizer in the catalytic mechanism.

It belongs to the QNG1 protein family.

It catalyses the reaction queuosine 5'-phosphate + H2O = queuine + D-ribose 5-phosphate. Its function is as follows. Catalyzes the hydrolysis of queuosine 5'-phosphate, releasing the nucleobase queuine (q). Is required for salvage of queuine from exogenous queuosine (Q) that is imported and then converted to queuosine 5'-phosphate intracellularly. In Schizosaccharomyces pombe (strain 972 / ATCC 24843) (Fission yeast), this protein is Queuosine 5'-phosphate N-glycosylase/hydrolase.